We begin with the raw amino-acid sequence, 206 residues long: Guanylate kinase (206 aa).

A Guanylate kinase-like domain is found at 6–184 (GTLYIISAPS…ALGDLKAIFR (179 aa)). ATP is bound at residue 13-20 (APSGAGKS).

The protein belongs to the guanylate kinase family.

Its subcellular location is the cytoplasm. It catalyses the reaction GMP + ATP = GDP + ADP. In terms of biological role, essential for recycling GMP and indirectly, cGMP. The polypeptide is Guanylate kinase (Pseudomonas fluorescens (strain ATCC BAA-477 / NRRL B-23932 / Pf-5)).